The chain runs to 205 residues: Inactive ribonuclease-like protein 9 (205 aa).

An N-terminal signal peptide occupies residues 1–24 (MMLITTHSLPLLLLLLQLWQPLQF). 3 disulfides stabilise this stretch: cysteine 97–cysteine 152, cysteine 115–cysteine 167, and cysteine 122–cysteine 129. N-linked (GlcNAc...) asparagine glycans are attached at residues asparagine 130 and asparagine 142.

It belongs to the pancreatic ribonuclease family.

Its subcellular location is the secreted. Its function is as follows. Does not exhibit any ribonuclease activity. This is Inactive ribonuclease-like protein 9 (RNASE9) from Cebus albifrons (White-fronted capuchin).